The chain runs to 3564 residues: CUB and sushi domain-containing protein 1 (3564 aa).

The signal sequence occupies residues 1 to 29; sequence MTAWRKFKSLLLPLVLAVLCAGLLTAAKG. Residues 30-3487 lie on the Extracellular side of the membrane; it reads QNCGGLVQGP…NHYQGTSSGS (3458 aa). 10 disulfide bridges follow: Cys32-Cys58, Cys145-Cys185, Cys171-Cys202, Cys208-Cys234, Cys349-Cys389, Cys375-Cys406, Cys411-Cys437, Cys527-Cys567, Cys553-Cys580, and Cys584-Cys610. Residues 32 to 140 form the CUB 1 domain; the sequence is CGGLVQGPNG…QGFKAMYEVL (109 aa). Asn40 and Asn57 each carry an N-linked (GlcNAc...) asparagine glycan. The Sushi 1 domain occupies 143–204; the sequence is HTCGNPGEIL…WDFPAPFCRA (62 aa). The CUB 2 domain maps to 208–312; sequence CGGTLRGTSG…KGFNAQFQVK (105 aa). Residues 347 to 408 enclose the Sushi 2 domain; sequence DMCPDPGIPD…WNDHRPICRA (62 aa). Residues 411–522 enclose the CUB 3 domain; the sequence is CGSNLRGPSG…PGFKAVYQEI (112 aa). One can recognise a Sushi 3 domain in the interval 525–582; the sequence is GGCGDPGIPAYGKRTGSSFLHGDTLTFECQAAFELVGERVITCQKNNQWSGNKPSCVF. A CUB 4 domain is found at 584–692; that stretch reads CFFNFTAPSG…RGFNITYTTF (109 aa). N-linked (GlcNAc...) asparagine glycans are attached at residues Asn587 and Asn686. The region spanning 695–756 is the Sushi 4 domain; it reads NECHDPGIPV…WSSTVPRCEA (62 aa). Intrachain disulfides connect Cys697/Cys738, Cys723/Cys754, Cys758/Cys784, Cys873/Cys913, Cys899/Cys926, and Cys930/Cys956. Positions 758 to 866 constitute a CUB 5 domain; that stretch reads CGGHLTASSG…VGFLIHYESV (109 aa). The 58-residue stretch at 871–928 folds into the Sushi 5 domain; it reads DSCLDPGIPVNGQRHGSNFGIRSTVTFSCDPGYTLSDDEPLVCEKNHQWNHALPSCDA. The 111-residue stretch at 930–1040 folds into the CUB 6 domain; the sequence is CGGYIHGKSG…EGFNITFAEY (111 aa). Residues Asn955, Asn1015, and Asn1034 are each glycosylated (N-linked (GlcNAc...) asparagine). The Sushi 6 domain occupies 1043–1102; the sequence is EPCDDPGVPAFSRRIGFQFGVGDTLAFTCFQGYRLEGATKLTCLGGGRRVWSAPLPRCVA. 3 disulfides stabilise this stretch: Cys1045/Cys1085, Cys1071/Cys1100, and Cys1104/Cys1130. A CUB 7 domain is found at 1104–1212; that stretch reads CGASVKGNEG…QGFQLTYTSF (109 aa). Asn1184 and Asn1197 each carry an N-linked (GlcNAc...) asparagine glycan. The Sushi 7 domain maps to 1215 to 1275; it reads VKCEDPGIPN…WDKPMPSCVA (61 aa). 12 disulfide bridges follow: Cys1217/Cys1258, Cys1244/Cys1273, Cys1277/Cys1304, Cys1391/Cys1431, Cys1417/Cys1447, Cys1451/Cys1477, Cys1564/Cys1604, Cys1590/Cys1621, Cys1625/Cys1651, Cys1741/Cys1781, Cys1767/Cys1798, and Cys1802/Cys1828. Residues 1277 to 1386 form the CUB 8 domain; the sequence is CGGLVHAATS…SGFSIQFSTS (110 aa). A Sushi 8 domain is found at 1389 to 1449; the sequence is STCNDPGMPQ…WQPDPPSCIA (61 aa). An N-linked (GlcNAc...) asparagine glycan is attached at Asn1399. Positions 1451 to 1559 constitute a CUB 9 domain; sequence CGGNLTGPAG…SGFAIEFKEK (109 aa). N-linked (GlcNAc...) asparagine glycosylation is found at Asn1454 and Asn1572. One can recognise a Sushi 9 domain in the interval 1562–1623; sequence EACFDPGNIM…WDRALPACQA (62 aa). The CUB 10 domain maps to 1625–1733; it reads CGGQYTGSEG…RGFHFVYQAV (109 aa). An N-linked (GlcNAc...) asparagine glycan is attached at Asn1644. One can recognise a Sushi 10 domain in the interval 1739-1800; the sequence is TQCSSVPEPR…WNDTIPSCVV (62 aa). N-linked (GlcNAc...) asparagine glycosylation is found at Asn1792, Asn1805, and Asn1882. A CUB 11 domain is found at 1802-1910; that stretch reads CSGNFTQRRG…AGFHLEYKTV (109 aa). A Sushi 11 domain is found at 1913–1972; that stretch reads AACQEPALPSNGIKIGDRYMVNDVLSFQCEPGYTLQGRSHISCMPGTVRRWNYPSPLCIA. Cystine bridges form between Cys1915/Cys1955, Cys1941/Cys1970, and Cys1974/Cys2000. Residues 1974–2082 form the CUB 12 domain; sequence CGGTLTSMSG…QGFKLSYQAY (109 aa). Asn2018 carries an N-linked (GlcNAc...) asparagine glycan. In terms of domain architecture, Sushi 12 spans 2085 to 2144; sequence QNCPDPPAFQNGFMINSDYSVGQSISFECYPGYILLGHPVLTCQHGTDRNWNYPFPRCDA. Intrachain disulfides connect Cys2087–Cys2127, Cys2113–Cys2142, and Cys2146–Cys2172. The CUB 13 domain occupies 2146 to 2257; the sequence is CGYNVTSQNG…LNFHAFQLKR (112 aa). N-linked (GlcNAc...) asparagine glycans are attached at residues Asn2149, Asn2154, and Asn2187. In terms of domain architecture, Sushi 13 spans 2256–2317; the sequence is KRCPPPPAVP…FQGSPPTCEA (62 aa). Cystine bridges form between Cys2258–Cys2300, Cys2286–Cys2315, and Cys2319–Cys2347. A CUB 14 domain is found at 2319-2430; sequence CPANEVRTES…KGFKIRYAAP (112 aa). N-linked (GlcNAc...) asparagine glycosylation is found at Asn2358, Asn2394, Asn2400, Asn2445, Asn2470, and Asn2503. Sushi domains are found at residues 2430 to 2492, 2493 to 2554, 2555 to 2619, 2620 to 2677, 2678 to 2735, 2736 to 2793, 2794 to 2856, 2857 to 2914, 2918 to 2975, 2976 to 3034, 3035 to 3094, 3095 to 3152, 3153 to 3210, 3214 to 3272, and 3273 to 3332; these read PYCS…LCQA, VSCG…TCKP, VPCP…RCKV, ISCG…RCLA, GHCG…VCVP, ITCG…ICRV, VNCS…KCLA, ISCG…HCSG, GFCG…VCEA, VSCG…DCTI, ISCG…LCKA, VLCN…QCLP, VFCG…TCID, TACP…ECIP, and HACR…VCKS. 12 disulfide bridges follow: Cys2432/Cys2473, Cys2459/Cys2490, Cys2495/Cys2537, Cys2521/Cys2552, Cys2557/Cys2602, Cys2588/Cys2617, Cys2622/Cys2662, Cys2648/Cys2675, Cys2680/Cys2720, Cys2706/Cys2733, Cys2738/Cys2778, and Cys2764/Cys2791. Asn2605 carries an N-linked (GlcNAc...) asparagine glycan. Residues Asn2750 and Asn2761 are each glycosylated (N-linked (GlcNAc...) asparagine). A glycan (N-linked (GlcNAc...) asparagine) is linked at Asn2795. 18 disulfide bridges follow: Cys2796/Cys2841, Cys2827/Cys2854, Cys2859/Cys2899, Cys2885/Cys2912, Cys2920/Cys2960, Cys2946/Cys2973, Cys2978/Cys3019, Cys3005/Cys3032, Cys3037/Cys3079, Cys3063/Cys3092, Cys3097/Cys3137, Cys3123/Cys3150, Cys3155/Cys3195, Cys3181/Cys3208, Cys3216/Cys3257, Cys3243/Cys3270, Cys3275/Cys3317, and Cys3302/Cys3330. N-linked (GlcNAc...) asparagine glycosylation occurs at Asn2894. Asn2963 carries an N-linked (GlcNAc...) asparagine glycan. N-linked (GlcNAc...) asparagine glycosylation is found at Asn3022, Asn3056, and Asn3086. N-linked (GlcNAc...) asparagine glycosylation is found at Asn3228 and Asn3260. N-linked (GlcNAc...) asparagine glycans are attached at residues Asn3339, Asn3379, and Asn3386. A helical transmembrane segment spans residues 3488 to 3508; that stretch reads VAAAILVPFFALILSGFAFYL. Residues 3509 to 3564 lie on the Cytoplasmic side of the membrane; the sequence is YKHRTRPKVQYNGYAGHENSNGQASFENPMYDTNLKPTEAKAVRFDTTLNTVCTVV.

Belongs to the CSMD family.

The protein resides in the membrane. In Mus musculus (Mouse), this protein is CUB and sushi domain-containing protein 1 (Csmd1).